A 220-amino-acid polypeptide reads, in one-letter code: Ribosomal RNA large subunit methyltransferase E (220 aa).

S-adenosyl-L-methionine-binding residues include Gly60, Trp62, Asp92, Asp108, and Asp133. Lys173 (proton acceptor) is an active-site residue. Residues 197-220 form a disordered region; that stretch reads RKPKASRDKSSETFILGRQLKQPR.

It belongs to the class I-like SAM-binding methyltransferase superfamily. RNA methyltransferase RlmE family.

The protein resides in the cytoplasm. It catalyses the reaction uridine(2552) in 23S rRNA + S-adenosyl-L-methionine = 2'-O-methyluridine(2552) in 23S rRNA + S-adenosyl-L-homocysteine + H(+). In terms of biological role, specifically methylates the uridine in position 2552 of 23S rRNA at the 2'-O position of the ribose in the fully assembled 50S ribosomal subunit. In Burkholderia ambifaria (strain MC40-6), this protein is Ribosomal RNA large subunit methyltransferase E.